A 1200-amino-acid chain; its full sequence is NACHT, LRR and PYD domains-containing protein 5 (1200 aa).

The Pyrin domain occupies 57 to 148 (SLTFSSYGLQ…SEKARDDMKR (92 aa)). A compositionally biased stretch (basic and acidic residues) spans 142–152 (ARDDMKRHSPE). The tract at residues 142-232 (ARDDMKRHSP…TEEQGHGGDT (91 aa)) is disordered. Residues 173 to 182 (QAVQQDSATA) are compositionally biased toward polar residues. Low complexity-rich tracts occupy residues 192–202 (QAMEQEGATAA) and 209–221 (ISQA…ATAA). Residues 280–602 (RTVVLHGKSG…ALYYVLEGLE (323 aa)) form the NACHT domain. Residue 286–293 (GKSGIGKS) coordinates ATP. 13 LRR repeats span residues 704–727 (LNSF…SFCL), 730–753 (CPYL…AEAC), 780–803 (HPHL…TLCA), 809–832 (TCKI…LWRI), 836–863 (NRNL…ALKH), 865–892 (KCLL…ILTT), 893–916 (SPSL…PLSD), 950–973 (NRSL…LLCR), 979–1002 (HCSL…FLAL), 1007–1034 (NSWL…VMRE), 1036–1059 (SCHL…SLSC), 1064–1092 (SRHL…LKQK), and 1121–1142 (NRHL…MMKL).

It belongs to the NLRP family. In terms of assembly, component of the subcortical maternal complex (SCMC), at least composed of NLRP5, KHDC3, OOEP, and TLE6 isoform 1. Within the complex, interacts with OOEP, KHDC3L and TLE6. The SCMC may facilitate translocation of its components between the nuclear and cytoplasmic compartments. As part of the SCMC interacts with the SCMC-associated protein ZBED3. As part of the SCMC interacts with the SCMC-associated protein CFL1/Cofilin-1. Interacts with PRKCE. Interacts with TUBB3 at cytoskeleton microtubules. Post-translationally, phosphorylated by PRKCE. In terms of tissue distribution, expressed in cumulus cells (at protein level). Highly abundant in oocytes and early embryos, however poorly expressed in somatic tissues such as the liver and spinal cord.

It is found in the cytoplasm. It localises to the cytoplasmic vesicle. The protein localises to the secretory vesicle. The protein resides in the cortical granule. Its subcellular location is the mitochondrion. It is found in the nucleus. It localises to the nucleolus. The protein localises to the golgi apparatus. Functionally, component of the subcortical maternal complex (SCMC), a multiprotein complex that plays a key role in early embryonic development. The SCMC complex is a structural constituent of cytoplasmic lattices, which consist in fibrous structures found in the cytoplasm of oocytes and preimplantation embryos. They are required to store maternal proteins critical for embryonic development, such as proteins that control epigenetic reprogramming of the preimplantation embryo, and prevent their degradation or activation. Required for the localization of cortical granules to the cortex of oocytes, via association with the cortical actin scaffold. Required for cortical actin clearance prior to oocyte exocytosis and prevention of polyspermy. Involved in regulating post-fertilization Ca(2+) release and endoplasmic reticulum storage (ER) storage via regulation of cellular localization. May be involved in the localization of mitochondria to the cytoplasm and perinuclear region in oocytes and early stage embryos, independent of its role in CPL formation. This is NACHT, LRR and PYD domains-containing protein 5 (NLRP5) from Homo sapiens (Human).